Here is a 336-residue protein sequence, read N- to C-terminus: Inositol 2-dehydrogenase (336 aa).

Belongs to the Gfo/Idh/MocA family. As to quaternary structure, homotetramer.

The catalysed reaction is myo-inositol + NAD(+) = scyllo-inosose + NADH + H(+). In terms of biological role, involved in the oxidation of myo-inositol (MI) to 2-keto-myo-inositol (2KMI or 2-inosose). This chain is Inositol 2-dehydrogenase, found in Agrobacterium fabrum (strain C58 / ATCC 33970) (Agrobacterium tumefaciens (strain C58)).